Here is a 348-residue protein sequence, read N- to C-terminus: Phosphate acyltransferase (348 aa).

The protein belongs to the PlsX family. In terms of assembly, homodimer. Probably interacts with PlsY.

It localises to the cytoplasm. It carries out the reaction a fatty acyl-[ACP] + phosphate = an acyl phosphate + holo-[ACP]. Its pathway is lipid metabolism; phospholipid metabolism. Catalyzes the reversible formation of acyl-phosphate (acyl-PO(4)) from acyl-[acyl-carrier-protein] (acyl-ACP). This enzyme utilizes acyl-ACP as fatty acyl donor, but not acyl-CoA. The chain is Phosphate acyltransferase from Pectobacterium atrosepticum (strain SCRI 1043 / ATCC BAA-672) (Erwinia carotovora subsp. atroseptica).